The primary structure comprises 44 residues: KKVYSFLKLKGCLPRNRFCNALSGPRCCSGLRCKELSIWASKCL.

Residues 1 to 9 (KKVYSFLKL) constitute a propeptide that is removed on maturation. 3 cysteine pairs are disulfide-bonded: Cys-12–Cys-28, Cys-19–Cys-33, and Cys-27–Cys-43.

Belongs to the neurotoxin 01 (U2-agtx) family. As to expression, expressed by the venom gland.

It is found in the secreted. In terms of biological role, insect active toxin causing rapid but reversible paralysis in crickets. No activity shown in mammals. Does not show effect on mammalian voltage-gated calcium channels. This is U2-agatoxin-Ao1s from Agelena orientalis (Funnel-web spider).